Reading from the N-terminus, the 1203-residue chain is DNA-directed RNA polymerase subunit beta (1203 aa).

Residues 1174–1195 (AAQEAKAAFEAEEAEKATKAEA) are compositionally biased toward basic and acidic residues. Residues 1174–1203 (AAQEAKAAFEAEEAEKATKAEATEEAAEQE) form a disordered region.

Belongs to the RNA polymerase beta chain family. In terms of assembly, the RNAP catalytic core consists of 2 alpha, 1 beta, 1 beta' and 1 omega subunit. When a sigma factor is associated with the core the holoenzyme is formed, which can initiate transcription.

The enzyme catalyses RNA(n) + a ribonucleoside 5'-triphosphate = RNA(n+1) + diphosphate. Its function is as follows. DNA-dependent RNA polymerase catalyzes the transcription of DNA into RNA using the four ribonucleoside triphosphates as substrates. This is DNA-directed RNA polymerase subunit beta from Streptococcus pneumoniae (strain P1031).